We begin with the raw amino-acid sequence, 118 residues long: Large ribosomal subunit protein bL20 (118 aa).

Belongs to the bacterial ribosomal protein bL20 family.

Functionally, binds directly to 23S ribosomal RNA and is necessary for the in vitro assembly process of the 50S ribosomal subunit. It is not involved in the protein synthesizing functions of that subunit. In Cupriavidus metallidurans (strain ATCC 43123 / DSM 2839 / NBRC 102507 / CH34) (Ralstonia metallidurans), this protein is Large ribosomal subunit protein bL20.